The chain runs to 80 residues: Lantibiotic Flvalpha.b (80 aa).

The propeptide at 1–38 (MNKNPIYRSEEEAKNIACGNVAAELDENSQALDAINGA) is cleaved by FlvT. 2,3-didehydrobutyrine; by FlvM1 occurs at positions 43 and 47. A cross-link (beta-methyllanthionine (Thr-Cys); by FlvM1) is located at residues 52-55 (TVGC). Positions 58–68 (SYGLGNGGYCC) form a cross-link, lanthionine (Ser-Cys); by FlvM1. 2 cross-links (beta-methyllanthionine (Thr-Cys); by FlvM1) span residues 69-74 (TYTVEC) and 71-78 (TVECSKTC).

The lanthionine formed by Ser-58 and Cys-68 forms a putative lipid II binding motif. Post-translationally, maturation of FlvA1 peptides involves the enzymatic conversion of Thr, and Ser into dehydrated AA and the formation of thioether bonds with cysteines. Modifications are processed by the flavecin synthetase FlvM1. This is followed by membrane translocation and cleavage of the modified precursor. In terms of processing, contains DL-lanthionine and DL-beta-methyllanthionine, when coepressed in E.coli with the flavecin synthetase FlvM1.

Its subcellular location is the secreted. Its function is as follows. Lanthionine-containing peptide antibiotic (lantibiotic) only active on Gram-positive bacteria in synergy with Flvbeta peptides, which are encoded by the same operon than Flvalpha.a. Shows antibacterial activity in synergy with Flvbeta.b, Flvbeta.c, Flvbeta.e and Flvbeta.g. Does not show antibacterial activity when tested with Flvbeta.a, Flvbeta.d, Flvbeta.f and Flvbeta.h. The bactericidal activity of lantibiotics is based on depolarization of energized bacterial cytoplasmic membranes, initiated by the formation of aqueous transmembrane pores. In Ruminococcus flavefaciens, this protein is Lantibiotic Flvalpha.b.